Reading from the N-terminus, the 519-residue chain is Apolipoprotein N-acyltransferase (519 aa).

Helical transmembrane passes span 6–26, 47–67, 83–103, 126–146, 174–194, and 206–226; these read APLG…IWIF, LTAI…ITGV, IAAF…FVWL, LFIL…SHSI, LLSA…IDFL, and WHYF…GWLL. Residues 244–482 form the CN hydrolase domain; it reads IQGNIPNQIK…YEIHAAPIYR (239 aa). E285 functions as the Proton acceptor in the catalytic mechanism. The active site involves K343. The active-site Nucleophile is the C394. A helical membrane pass occupies residues 496 to 516; that stretch reads VVFLLLVVSAIAWLYQIVFPL.

This sequence belongs to the CN hydrolase family. Apolipoprotein N-acyltransferase subfamily.

Its subcellular location is the cell inner membrane. It catalyses the reaction N-terminal S-1,2-diacyl-sn-glyceryl-L-cysteinyl-[lipoprotein] + a glycerophospholipid = N-acyl-S-1,2-diacyl-sn-glyceryl-L-cysteinyl-[lipoprotein] + a 2-acyl-sn-glycero-3-phospholipid + H(+). It participates in protein modification; lipoprotein biosynthesis (N-acyl transfer). Its function is as follows. Catalyzes the phospholipid dependent N-acylation of the N-terminal cysteine of apolipoprotein, the last step in lipoprotein maturation. The protein is Apolipoprotein N-acyltransferase of Synechocystis sp. (strain ATCC 27184 / PCC 6803 / Kazusa).